The primary structure comprises 65 residues: Beta-toxin Am IT (65 aa).

E1 bears the Pyrrolidone carboxylic acid (Glu); partial mark. Residues 1-64 (EHGYLLDKYT…LWNYKTNKCK (64 aa)) enclose the LCN-type CS-alpha/beta domain. 4 disulfide bridges follow: C12–C63, C16–C38, C23–C45, and C27–C47. A Serine amide modification is found at S65.

This sequence belongs to the long (4 C-C) scorpion toxin superfamily. Sodium channel inhibitor family. Expressed by the venom gland.

The protein localises to the secreted. Its function is as follows. Has a toxic effect on insects and mammals. On German cockroach larvae, it provokes contraction, paralysis and lethality. Intracerebroventricular injection into mice causes severe neurotoxic symptoms. It fully competes with the binding of the iodinated Css4 (AC P60266) on rat brain synaptosomes, with moderate affinity and in a concentration-dependent manner (EC(50)=25 nM). It may act on both site 3 and site 4 of voltage-gated sodium channels. The polypeptide is Beta-toxin Am IT (Androctonus mauritanicus mauritanicus (Scorpion)).